Consider the following 453-residue polypeptide: Serine incorporator 1 (453 aa).

The N-myristoyl glycine moiety is linked to residue Gly-2. Residues 2 to 39 (GSVLGLCSMASWIPCLCGSAPCLLCRCCPSGNNSTVTR) lie on the Cytoplasmic side of the membrane. A helical transmembrane segment spans residues 40–60 (LIYALFLLVGVCVACVMLIPG). The Lumenal portion of the chain corresponds to 61–88 (MEEQLNKIPGFCENEKGMVPCNILVGYK). A helical transmembrane segment spans residues 89–109 (AVYRLCFGLAMFYLLLSLLMI). The Cytoplasmic segment spans residues 110 to 123 (KVKSSSDPRAAIHN). Residues 124-144 (GFWFFKFAAAIAIIIGAFFIP) form a helical membrane-spanning segment. Residues 145 to 151 (EGTFTTV) are Lumenal-facing. A helical transmembrane segment spans residues 152–172 (WFYVGMAGAFCFILIQLVLLI). At 173–197 (DFAHSWNESWVEKMEEGNSRCWYAA) the chain is on the cytoplasmic side. The chain crosses the membrane as a helical span at residues 198–218 (LLSATALNYLLSLVAVVLFFV). Residues 219 to 231 (YYTHPASCAENKA) are Lumenal-facing. The helical transmembrane segment at 232–252 (FISVNMLLCLGASIMSILPKI) threads the bilayer. Residues 253-259 (QESQPRS) are Cytoplasmic-facing. A helical transmembrane segment spans residues 260–280 (GLLQSSVITVYTMYLTWSAMT). Over 281-309 (NEPETECNPSLLNIIGYNTTSTVSKEGQS) the chain is Lumenal. The helical transmembrane segment at 310 to 330 (VQWWHTQGIIGLILFLLCVFY) threads the bilayer. Residues 331–387 (SSIRTSNNSQVNKLTLTSDESTLIEDGGARNDGSLEDGDDVHRAVDNERDGVTYSYS) are Cytoplasmic-facing. Ser-351 is subject to Phosphoserine. Thr-352 carries the post-translational modification Phosphothreonine. Residue Ser-364 is modified to Phosphoserine. Residues 388-408 (FFHFMLFLASLYIMMTLTNWY) form a helical membrane-spanning segment. Over 409-426 (RYEPSREMKSQWTAVWVK) the chain is Lumenal. The helical transmembrane segment at 427–447 (ISSSWIGIVLYVWTLVAPLVL) threads the bilayer. Residues 448–453 (TNRDFD) lie on the Cytoplasmic side of the membrane.

Belongs to the TDE1 family. In terms of assembly, interacts with SPTLC1.

The protein resides in the endoplasmic reticulum membrane. Enhances the incorporation of serine into phosphatidylserine and sphingolipids. This is Serine incorporator 1 (SERINC1) from Bos taurus (Bovine).